A 123-amino-acid chain; its full sequence is Large ribosomal subunit protein bL12 (123 aa).

It belongs to the bacterial ribosomal protein bL12 family. In terms of assembly, homodimer. Part of the ribosomal stalk of the 50S ribosomal subunit. Forms a multimeric L10(L12)X complex, where L10 forms an elongated spine to which 2 to 4 L12 dimers bind in a sequential fashion. Binds GTP-bound translation factors.

Forms part of the ribosomal stalk which helps the ribosome interact with GTP-bound translation factors. Is thus essential for accurate translation. This Mycoplasmopsis agalactiae (strain NCTC 10123 / CIP 59.7 / PG2) (Mycoplasma agalactiae) protein is Large ribosomal subunit protein bL12.